Here is a 454-residue protein sequence, read N- to C-terminus: Adenylosuccinate synthetase isozyme 1 B (454 aa).

The tract at residues Met-1–Tyr-24 is disordered. Residues Gly-39–Lys-45 and Gly-67–Thr-69 contribute to the GTP site. Asp-40 functions as the Proton acceptor in the catalytic mechanism. The Mg(2+) site is built by Asp-40 and Gly-67. Asp-40 is a substrate binding site. IMP-binding positions include Asp-40 to Lys-43, Asn-65 to His-68, Thr-160, Arg-174, Asn-253, Thr-268, and Arg-332. Catalysis depends on His-68, which acts as the Proton donor. Val-328–Arg-334 provides a ligand contact to substrate. GTP-binding positions include Arg-334, Lys-360–Asp-362, and Gly-442–Lys-445.

It belongs to the adenylosuccinate synthetase family. Homodimer. Requires Mg(2+) as cofactor.

It localises to the cytoplasm. It catalyses the reaction IMP + L-aspartate + GTP = N(6)-(1,2-dicarboxyethyl)-AMP + GDP + phosphate + 2 H(+). Its pathway is purine metabolism; AMP biosynthesis via de novo pathway; AMP from IMP: step 1/2. In terms of biological role, component of the purine nucleotide cycle (PNC), which interconverts IMP and AMP to regulate the nucleotide levels in various tissues, and which contributes to glycolysis and ammoniagenesis. Catalyzes the first committed step in the biosynthesis of AMP from IMP. The polypeptide is Adenylosuccinate synthetase isozyme 1 B (adss1-b) (Xenopus laevis (African clawed frog)).